The primary structure comprises 240 residues: EF-hand domain-containing protein D2 (240 aa).

A2 is subject to N-acetylalanine. A Phosphoserine modification is found at S11. Residues R13 to A38 are disordered. S74 and S76 each carry phosphoserine. Y83 is subject to Phosphotyrosine. EF-hand domains lie at K92–P127 and Q128–G163. Positions 105, 109, 116, 141, 143, 145, 147, and 152 each coordinate Ca(2+). K233 carries the N6-acetyllysine modification.

Interacts with CASP9; with inactive form. As to expression, found in lymphocytes; preferentially expressed in CD8+ cells.

The protein localises to the membrane raft. May regulate B-cell receptor (BCR)-induced immature and primary B-cell apoptosis. Plays a role as negative regulator of the canonical NF-kappa-B-activating branch. Controls spontaneous apoptosis through the regulation of BCL2L1 abundance. This chain is EF-hand domain-containing protein D2 (EFHD2), found in Homo sapiens (Human).